Here is a 51-residue protein sequence, read N- to C-terminus: MARNKPIAKKLRLAKAAKQNRRIPVWVIVKTNRKVLTHPKRRYWRRTKLKE.

The protein belongs to the eukaryotic ribosomal protein eL39 family.

This chain is Large ribosomal subunit protein eL39, found in Thermococcus sibiricus (strain DSM 12597 / MM 739).